Here is a 353-residue protein sequence, read N- to C-terminus: Cytochrome bc1 complex Rieske iron-sulfur subunit (353 aa).

A disordered region spans residues Met1–Ala51. Positions His40–Ala51 are enriched in basic and acidic residues. The next 3 helical transmembrane spans lie at Ala60 to Ile80, Phe99 to Trp119, and Leu164 to Leu184. In terms of domain architecture, Rieske spans Lys246–Glu336. [2Fe-2S] cluster contacts are provided by Cys279, His281, Cys298, and His301. Cysteines 284 and 300 form a disulfide.

It belongs to the Rieske iron-sulfur protein family. In terms of assembly, the cytochrome bc1 complex is composed of a cytochrome b (QcrB), the Rieske iron-sulfur protein (QcrA) and a diheme cytochrome c (QcrC) subunit. [2Fe-2S] cluster serves as cofactor.

The protein localises to the cell membrane. Iron-sulfur subunit of the cytochrome bc1 complex, an essential component of the respiratory electron transport chain required for ATP synthesis. The bc1 complex catalyzes the oxidation of menaquinol and the reduction of cytochrome c in the respiratory chain. The bc1 complex operates through a Q-cycle mechanism that couples electron transfer to generation of the proton gradient that drives ATP synthesis. In Streptomyces coelicolor (strain ATCC BAA-471 / A3(2) / M145), this protein is Cytochrome bc1 complex Rieske iron-sulfur subunit (qcrA).